Reading from the N-terminus, the 102-residue chain is Large ribosomal subunit protein bL21 (102 aa).

This sequence belongs to the bacterial ribosomal protein bL21 family. As to quaternary structure, part of the 50S ribosomal subunit. Contacts protein L20.

In terms of biological role, this protein binds to 23S rRNA in the presence of protein L20. The sequence is that of Large ribosomal subunit protein bL21 from Oceanobacillus iheyensis (strain DSM 14371 / CIP 107618 / JCM 11309 / KCTC 3954 / HTE831).